The primary structure comprises 383 residues: Lipid-A-disaccharide synthase (383 aa).

The protein belongs to the LpxB family.

It carries out the reaction a lipid X + a UDP-2-N,3-O-bis[(3R)-3-hydroxyacyl]-alpha-D-glucosamine = a lipid A disaccharide + UDP + H(+). It participates in bacterial outer membrane biogenesis; LPS lipid A biosynthesis. Functionally, condensation of UDP-2,3-diacylglucosamine and 2,3-diacylglucosamine-1-phosphate to form lipid A disaccharide, a precursor of lipid A, a phosphorylated glycolipid that anchors the lipopolysaccharide to the outer membrane of the cell. This Trichlorobacter lovleyi (strain ATCC BAA-1151 / DSM 17278 / SZ) (Geobacter lovleyi) protein is Lipid-A-disaccharide synthase.